We begin with the raw amino-acid sequence, 436 residues long: 3-ketoacyl-CoA thiolase (436 aa).

Catalysis depends on cysteine 99, which acts as the Acyl-thioester intermediate. Catalysis depends on proton acceptor residues histidine 392 and cysteine 422.

Belongs to the thiolase-like superfamily. Thiolase family. In terms of assembly, heterotetramer of two alpha chains (FadJ) and two beta chains (FadI).

It localises to the cytoplasm. It carries out the reaction an acyl-CoA + acetyl-CoA = a 3-oxoacyl-CoA + CoA. The protein operates within lipid metabolism; fatty acid beta-oxidation. Catalyzes the final step of fatty acid oxidation in which acetyl-CoA is released and the CoA ester of a fatty acid two carbons shorter is formed. The polypeptide is 3-ketoacyl-CoA thiolase (Enterobacter sp. (strain 638)).